Consider the following 1040-residue polypeptide: Nucleotide-binding oligomerization domain-containing protein 2 (1040 aa).

2 consecutive CARD domains span residues 26–122 and 126–218; these read CEMC…LHGC and HSLH…EAAT. Positions 63-77 match the ATG16L1-binding motif motif; it reads WEVLSWEDYEGFHLL. T239, Y252, T253, G302, S303, G304, K305, S306, and T307 together coordinate ADP. Positions 241–274 are required for CARD9 binding; sequence DGAETLCLEDIYTENVLEVWADVGMAGPPQKSPA. The region spanning 293-618 is the NACHT domain; the sequence is DTVLVVGEAG…FFAAFYLALS (326 aa). Residue 299 to 306 participates in ATP binding; it reads GEAGSGKS. C395 is lipidated: S-palmitoyl cysteine. H603 lines the ADP pocket. LRR repeat units follow at residues 791 to 812, 816 to 839, 844 to 865, 872 to 884, 900 to 920, 928 to 949, 956 to 976, 984 to 1005, and 1012 to 1032; these read RPVA…QLLP, VCKA…IECA, QLQK…SMAK, NFLA…NYIT, SLQF…QALA, SLRW…ALAL, MLEE…CSLA, SLKI…ALLQ, and TILE…DKLG. C1033 carries the S-palmitoyl cysteine lipid modification.

This sequence belongs to the NOD1-NOD2 family. In terms of assembly, homooligomer: homooligomerizes following muramyl dipeptide (MDP)-binding, promoting RIPK2 recruitment. Interacts (via CARD domain) with RIPK2 (via CARD domain). Following RIPK2 recruitment, RIPK2 homooligomerizes via its CARD domain and forms long filaments named RIPosomes. Interacts (via CARD domain) with ubiquitin; inhibiting interaction with RIPK2. Component of a signaling complex consisting of ARHGEF2, NOD2 and RIPK2. Interacts with ANKRD17 (via N-terminus). Interacts with HSPA1A; the interaction enhances NOD2 stability. Interacts (via both CARD domains) with HSP90; the interaction enhances NOD2 stability. Interacts (via CARD domain) with SOCS3; the interaction promotes NOD2 degradation. Interacts (via CARD domain) with ERBIN; the interaction inhibits activation of NOD2. Interacts with MAPKBP1; the interaction is enhanced in the presence of muramyl dipeptide (MDP) and inhibits NOD2 homooligomerization and activation. Interacts with INAVA; the interaction takes place upon Pattern recognition receptor (PRR) stimulation. Interacts (via NACHT domain) with CARD9. Interacts (via CARD domain) with CASP1; this interaction leads to IL1B processing. Also interacts with CASP4. Interacts with NLRP1; this interaction is enhanced in the presence of muramyl dipeptide (MDP) and leads to increased IL1B release. Interacts with NLRP12; this interaction promotes degradation of NOD2 through the ubiquitin-proteasome pathway. Interacts with ANKHD1, C10orf67, CHMP5, DOCK7, ENTR1, KRT15, LDOC1, PPP1R12C, PPP2R3B, TRIM41 and VIM. Interacts with MAVS; interaction takes place following single-stranded RNA (ssRNA)-binding. Interacts with ATG16L1. Interacts with IRGM; promoting IRGM 'Lys-63'-linked polyubiquitination, which is required for interactions with the core autophagy factors. Palmitoylated by ZDHHC5; palmitoylation is required for proper recruitment to the bacterial entry site and hence for proper signaling upon cognate peptidoglycan detection. Palmitoylation promotes localization to the cell membrane. Palmitoylation protects from SQSTM1/p62-dependent autophagic degradation. Post-translationally, polyubiquitinated by TRIM27, leading to proteasome-mediated degradation. Polyubiquitinated and degraded following muramyl dipeptide (MDP) stimulation, conferring MDP tolerance and preventing septic shock. In terms of processing, degraded via selective autophagy following interaction with IRGM. IRGM promotes NOD2-RIPK2 RIPosome recruitment to autophagosome membranes, promoting their SQSTM1/p62-dependent autophagic degradation. O-glycosylated by OGT, O-GlcNAcylation increases protein stability. As to expression, expressed in monocytes, macrophages, dendritic cells, hepatocytes, preadipocytes, epithelial cells of oral cavity, lung and intestine, with higher expression in ileal Paneth cells and in intestinal stem cells. In terms of tissue distribution, expressed at higher level in leukocytes.

It localises to the cell membrane. It is found in the basolateral cell membrane. Its subcellular location is the cytoplasm. The protein localises to the mitochondrion. With respect to regulation, ADP-binding promotes an inactive closed conformation. Pattern recognition receptor (PRR) that detects bacterial peptidoglycan fragments and other danger signals and plays an important role in gastrointestinal immunity. Specifically activated by muramyl dipeptide (MDP), a fragment of bacterial peptidoglycan found in every bacterial peptidoglycan type. NOD2 specifically recognizes and binds 6-O-phospho-MDP, the phosphorylated form of MDP, which is generated by NAGK. 6-O-phospho-MDP-binding triggers oligomerization that facilitates the binding and subsequent activation of the proximal adapter receptor-interacting RIPK2. Following recruitment, RIPK2 undergoes 'Met-1'- (linear) and 'Lys-63'-linked polyubiquitination by E3 ubiquitin-protein ligases XIAP, BIRC2, BIRC3 and the LUBAC complex, becoming a scaffolding protein for downstream effectors, triggering activation of the NF-kappa-B and MAP kinases signaling. This in turn leads to the transcriptional activation of hundreds of genes involved in immune response. Its ability to detect bacterial MDP plays a central role in maintaining the equilibrium between intestinal microbiota and host immune responses to control inflammation. An imbalance in this relationship results in dysbiosis, whereby pathogenic bacteria prevail on commensals, causing damage in the intestinal epithelial barrier as well as allowing bacterial invasion and inflammation. Acts as a regulator of appetite by sensing MDP in a subset of brain neurons: microbiota-derived MDP reach the brain, where they bind and activate NOD2 in inhibitory hypothalamic neurons, decreasing neuronal activity, thereby regulating satiety and body temperature. NOD2-dependent MDP-sensing of bacterial cell walls in the intestinal epithelial compartment contributes to sustained postnatal growth upon undernutrition. Also plays a role in antiviral response by acting as a sensor of single-stranded RNA (ssRNA) from viruses: upon ssRNA-binding, interacts with MAVS, leading to activation of interferon regulatory factor-3/IRF3 and expression of type I interferon. Also acts as a regulator of autophagy in dendritic cells via its interaction with ATG16L1, possibly by recruiting ATG16L1 at the site of bacterial entry. NOD2 activation in the small intestine crypt also contributes to intestinal stem cells survival and function: acts by promoting mitophagy via its association with ATG16L1. In addition to its main role in innate immunity, also regulates the adaptive immune system by acting as regulator of helper T-cell and regulatory T-cells (Tregs). Besides recognizing pathogens, also involved in the endoplasmic reticulum stress response: acts by sensing and binding to the cytosolic metabolite sphingosine-1-phosphate generated in response to endoplasmic reticulum stress, initiating an inflammation process that leads to activation of the NF-kappa-B and MAP kinases signaling. May also be involved in NLRP1 activation following activation by MDP, leading to CASP1 activation and IL1B release in macrophages. Functionally, acts as a pattern recognition receptor (PRR); able to activate NF-kappa-B. In terms of biological role, can activate NF-kappa-B in a muramyl dipeptide (MDP)-independent manner. In Homo sapiens (Human), this protein is Nucleotide-binding oligomerization domain-containing protein 2.